The sequence spans 440 residues: NK1 transcription factor-related protein 1 (440 aa).

Positions 1-13 (MSTSGPAAPGDVP) are enriched in low complexity. 3 disordered regions span residues 1–82 (MSTS…RPTS), 145–291 (GVAA…PRRA), and 342–387 (KWKK…PMGA). Positions 14–31 (ALPPPPPGPGSGPAPPAP) are enriched in pro residues. 2 stretches are compositionally biased toward low complexity: residues 62–74 (VPAV…AARP) and 145–158 (GVAA…TSAG). Over residues 170-181 (GYSSGSGRSPTA) the composition is skewed to polar residues. Residues 182 to 198 (DSEDEAPEDEDEEEAPE) are compositionally biased toward acidic residues. Residues 210 to 222 (GGSGGLGARGSGC) are compositionally biased toward gly residues. Low complexity predominate over residues 237–269 (AAPGPRGNSPGAPGPPATATGAGSAGSTPQGAA). The segment at residues 288 to 347 (PRRARTAFTYEQLVALENKFKATRYLSVCERLNLALSLSLTETQVKIWFQNRRTKWKKQN) is a DNA-binding region (homeobox). Residues 356 to 374 (TGGGGGPGPGAGPGAGLPG) are compositionally biased toward gly residues.

Belongs to the NK-1 homeobox family.

The protein resides in the nucleus. May be required for the coordinated crosstalk of factors involved in the maintenance of energy homeostasis, possibly by regulating the transcription of specific factors involved in energy balance. This is NK1 transcription factor-related protein 1 from Mus musculus (Mouse).